Consider the following 87-residue polypeptide: MANSAQARKRARQAVKQRAHNASLRSALRTAIKKIIKAVEAGDKTAAQSVFNENVSVIDRIADKKIIHKNKAARHKSRLSAAIKALA.

Residues 1–22 (MANSAQARKRARQAVKQRAHNA) are disordered. A compositionally biased stretch (basic residues) spans 7 to 19 (ARKRARQAVKQRA).

It belongs to the bacterial ribosomal protein bS20 family.

Its function is as follows. Binds directly to 16S ribosomal RNA. The protein is Small ribosomal subunit protein bS20 of Methylobacillus flagellatus (strain ATCC 51484 / DSM 6875 / VKM B-1610 / KT).